The primary structure comprises 152 residues: Large ribosomal subunit protein bL9 (152 aa).

The protein belongs to the bacterial ribosomal protein bL9 family.

Functionally, binds to the 23S rRNA. In Nostoc sp. (strain PCC 7120 / SAG 25.82 / UTEX 2576), this protein is Large ribosomal subunit protein bL9.